The chain runs to 456 residues: Adenylosuccinate synthetase (456 aa).

GTP contacts are provided by residues 11-17 (GDEGKGG) and 39-41 (GHT). Catalysis depends on D12, which acts as the Proton acceptor. Mg(2+) is bound by residues D12 and G39. IMP-binding positions include 12 to 15 (DEGK), 37 to 40 (NAGH), T127, R141, Q232, T247, and R328. H40 acts as the Proton donor in catalysis. Position 324 to 330 (324 to 330 (TVTGRPR)) interacts with substrate. Residues R330, 356–358 (HLD), and 441–443 (GVG) each bind GTP.

Belongs to the adenylosuccinate synthetase family. In terms of assembly, homodimer. Mg(2+) serves as cofactor.

Its subcellular location is the cytoplasm. It catalyses the reaction IMP + L-aspartate + GTP = N(6)-(1,2-dicarboxyethyl)-AMP + GDP + phosphate + 2 H(+). The protein operates within purine metabolism; AMP biosynthesis via de novo pathway; AMP from IMP: step 1/2. In terms of biological role, plays an important role in the de novo pathway of purine nucleotide biosynthesis. Catalyzes the first committed step in the biosynthesis of AMP from IMP. This is Adenylosuccinate synthetase from Natronomonas pharaonis (strain ATCC 35678 / DSM 2160 / CIP 103997 / JCM 8858 / NBRC 14720 / NCIMB 2260 / Gabara) (Halobacterium pharaonis).